The sequence spans 220 residues: Exodeoxyribonuclease 10 (220 aa).

The cofactor is Mg(2+).

Capable of degrading both single-strand and double-strand DNA with 3' to 5' polarity. Has higher affinity for ssDNA ends than for dsDNA. This Escherichia coli O6:H1 (strain CFT073 / ATCC 700928 / UPEC) protein is Exodeoxyribonuclease 10 (exoX).